The sequence spans 263 residues: Endonuclease NucS (263 aa).

The protein belongs to the NucS endonuclease family.

It localises to the cytoplasm. In terms of biological role, cleaves both 3' and 5' ssDNA extremities of branched DNA structures. The sequence is that of Endonuclease NucS from Methanocaldococcus jannaschii (strain ATCC 43067 / DSM 2661 / JAL-1 / JCM 10045 / NBRC 100440) (Methanococcus jannaschii).